We begin with the raw amino-acid sequence, 184 residues long: NADH-quinone oxidoreductase subunit B 1 (184 aa).

4 residues coordinate [4Fe-4S] cluster: C37, C38, C103, and C132.

The protein belongs to the complex I 20 kDa subunit family. As to quaternary structure, NDH-1 is composed of 14 different subunits. Subunits NuoB, C, D, E, F, and G constitute the peripheral sector of the complex. Requires [4Fe-4S] cluster as cofactor.

The protein resides in the cell membrane. The catalysed reaction is a quinone + NADH + 5 H(+)(in) = a quinol + NAD(+) + 4 H(+)(out). NDH-1 shuttles electrons from NADH, via FMN and iron-sulfur (Fe-S) centers, to quinones in the respiratory chain. The immediate electron acceptor for the enzyme in this species is believed to be a menaquinone. Couples the redox reaction to proton translocation (for every two electrons transferred, four hydrogen ions are translocated across the cytoplasmic membrane), and thus conserves the redox energy in a proton gradient. This is NADH-quinone oxidoreductase subunit B 1 from Streptomyces coelicolor (strain ATCC BAA-471 / A3(2) / M145).